The primary structure comprises 823 residues: Translation initiation factor IF-2 (823 aa).

Disordered regions lie at residues 30-66 (VPPSLARGTSTGKSFTTVEVRSKKRRPGEYISHDDKR) and 156-192 (TPSHSNKSGHDDRGGKKYAHGATGRHKEKEGVSIKKV). Residues 36 to 48 (RGTSTGKSFTTVE) show a composition bias toward polar residues. Residues 56–66 (PGEYISHDDKR) show a composition bias toward basic and acidic residues. The tr-type G domain maps to 322-491 (PRPPVVTVMG…LLLAEMLELS (170 aa)). The segment at 331 to 338 (GHVDHGKT) is G1. 331–338 (GHVDHGKT) lines the GTP pocket. Residues 356-360 (GITQH) form a G2 region. The G3 stretch occupies residues 377–380 (DTPG). GTP-binding positions include 377–381 (DTPGH) and 431–434 (NKID). Positions 431–434 (NKID) are G4. The segment at 467-469 (SAK) is G5.

The protein belongs to the TRAFAC class translation factor GTPase superfamily. Classic translation factor GTPase family. IF-2 subfamily.

It is found in the cytoplasm. Its function is as follows. One of the essential components for the initiation of protein synthesis. Protects formylmethionyl-tRNA from spontaneous hydrolysis and promotes its binding to the 30S ribosomal subunits. Also involved in the hydrolysis of GTP during the formation of the 70S ribosomal complex. The sequence is that of Translation initiation factor IF-2 from Anaplasma phagocytophilum (strain HZ).